The primary structure comprises 127 residues: Small ribosomal subunit protein uS13 (127 aa).

The interval 100–127 is disordered; it reads GQRTRTNARTRKGVRKTVAGKKKAPAKK. Residues 101–127 show a composition bias toward basic residues; it reads QRTRTNARTRKGVRKTVAGKKKAPAKK.

The protein belongs to the universal ribosomal protein uS13 family. Part of the 30S ribosomal subunit. Forms a loose heterodimer with protein S19. Forms two bridges to the 50S subunit in the 70S ribosome.

In terms of biological role, located at the top of the head of the 30S subunit, it contacts several helices of the 16S rRNA. In the 70S ribosome it contacts the 23S rRNA (bridge B1a) and protein L5 of the 50S subunit (bridge B1b), connecting the 2 subunits; these bridges are implicated in subunit movement. Contacts the tRNAs in the A and P-sites. In Synechococcus sp. (strain JA-3-3Ab) (Cyanobacteria bacterium Yellowstone A-Prime), this protein is Small ribosomal subunit protein uS13.